A 442-amino-acid chain; its full sequence is Cyclin-A1-2 (442 aa).

Polar residues-rich tracts occupy residues 1–12 (MSSSSRNLSQEN) and 39–63 (ITNQKNGSRNPSPSSTLVNCSNKIG). The tract at residues 1-72 (MSSSSRNLSQ…GQSKKAPKPA (72 aa)) is disordered.

This sequence belongs to the cyclin family. Cyclin AB subfamily. As to quaternary structure, interacts with CDC20-1, CDC20-2, FZR2/CCS52A1 and FZR1/CCS52A2. In terms of tissue distribution, expressed in roots, stems and flowers.

It localises to the cytoplasm. Its subcellular location is the nucleus. In terms of biological role, involved in the regulation of male meiosis progression. In Arabidopsis thaliana (Mouse-ear cress), this protein is Cyclin-A1-2 (CYCA1-2).